The primary structure comprises 319 residues: Thioredoxin reductase (319 aa).

FAD is bound at residue 36–43; sequence TGTNKGGQ. Cysteine 136 and cysteine 139 are joined by a disulfide. Position 288–297 (288–297) interacts with FAD; the sequence is DVIDHVYRQA.

This sequence belongs to the class-II pyridine nucleotide-disulfide oxidoreductase family. In terms of assembly, homodimer. FAD is required as a cofactor.

It localises to the cytoplasm. It catalyses the reaction [thioredoxin]-dithiol + NADP(+) = [thioredoxin]-disulfide + NADPH + H(+). The chain is Thioredoxin reductase (trxB) from Buchnera aphidicola subsp. Acyrthosiphon pisum (strain APS) (Acyrthosiphon pisum symbiotic bacterium).